A 262-amino-acid polypeptide reads, in one-letter code: Tritrans,polycis-undecaprenyl-diphosphate synthase (GGDP specific) (262 aa).

Aspartate 40 is a catalytic residue. Aspartate 40 contributes to the Mg(2+) binding site. Substrate is bound by residues 41–44 (GNRR), tryptophan 45, and 85–87 (SAE). Asparagine 88 acts as the Proton acceptor in catalysis. Substrate contacts are provided by residues arginine 92, arginine 211, and 217 to 219 (RIS). Position 230 (glutamate 230) interacts with Mg(2+).

This sequence belongs to the UPP synthase family. Homodimer. Requires Mg(2+) as cofactor.

The enzyme catalyses geranylgeranyl diphosphate + 7 isopentenyl diphosphate = tri-trans,hepta-cis-undecaprenyl diphosphate + 7 diphosphate. In terms of biological role, generates tritrans,heptacis-undecaprenyl diphosphate from isopentenyl pyrophosphate (IPP) and geranylgeranyl diphosphate. It is probably the precursor of glycosyl carrier lipids. The polypeptide is Tritrans,polycis-undecaprenyl-diphosphate synthase (GGDP specific) (uppS) (Sulfolobus acidocaldarius (strain ATCC 33909 / DSM 639 / JCM 8929 / NBRC 15157 / NCIMB 11770)).